The chain runs to 143 residues: 3-hydroxyacyl-[acyl-carrier-protein] dehydratase FabZ (143 aa).

His49 is an active-site residue.

Belongs to the thioester dehydratase family. FabZ subfamily.

The protein localises to the cytoplasm. The enzyme catalyses a (3R)-hydroxyacyl-[ACP] = a (2E)-enoyl-[ACP] + H2O. In terms of biological role, involved in unsaturated fatty acids biosynthesis. Catalyzes the dehydration of short chain beta-hydroxyacyl-ACPs and long chain saturated and unsaturated beta-hydroxyacyl-ACPs. In Ehrlichia chaffeensis (strain ATCC CRL-10679 / Arkansas), this protein is 3-hydroxyacyl-[acyl-carrier-protein] dehydratase FabZ.